We begin with the raw amino-acid sequence, 25 residues long: Caerin-2.4 (25 aa).

Expressed by the skin parotoid and/or rostral glands.

It localises to the secreted. Functionally, antibacterial peptide, that adopts an alpha helical conformation which can disrupt bacterial membranes. Each caerin displays a different antimicrobial specificity. This is Caerin-2.4 from Ranoidea caerulea (Green tree frog).